A 187-amino-acid polypeptide reads, in one-letter code: Fibroblast growth factor 4A (187 aa).

An N-terminal signal peptide occupies residues 1-22; sequence MTVPSALVPILLLGTAAVMVQC.

This sequence belongs to the heparin-binding growth factors family.

It localises to the secreted. In terms of biological role, plays an important role in the regulation of embryonic development, cell proliferation, and cell differentiation. Good candidate for an inducing factor with possible roles both in mesoderm induction at the blastula stage and in the formation of the anteroposterior axis at the gastrula stage. In Xenopus laevis (African clawed frog), this protein is Fibroblast growth factor 4A (fgf4-a).